The following is a 485-amino-acid chain: NADH-quinone oxidoreductase subunit N (485 aa).

14 consecutive transmembrane segments (helical) span residues 10–30 (ILPE…GLFL), 40–60 (IFFQ…EYLI), 71–91 (VVFS…AVFV), 107–127 (GDFY…TAAH), 129–149 (LVTI…LIAI), 164–184 (FVLG…VYGM), 209–229 (FLLV…GAFP), 248–268 (IVAT…LFVG), 276–296 (WIYL…LVAL), 304–324 (LLGY…TLNP), 336–356 (VIVY…ISVG), 377–397 (AFIL…GGFI), 410–430 (GNYF…FYYV), and 454–474 (LIAL…PMLL).

This sequence belongs to the complex I subunit 2 family. NDH-1 is composed of 14 different subunits. Subunits NuoA, H, J, K, L, M, N constitute the membrane sector of the complex.

The protein localises to the cell inner membrane. It catalyses the reaction a quinone + NADH + 5 H(+)(in) = a quinol + NAD(+) + 4 H(+)(out). Functionally, NDH-1 shuttles electrons from NADH, via FMN and iron-sulfur (Fe-S) centers, to quinones in the respiratory chain. The immediate electron acceptor for the enzyme in this species is believed to be ubiquinone. Couples the redox reaction to proton translocation (for every two electrons transferred, four hydrogen ions are translocated across the cytoplasmic membrane), and thus conserves the redox energy in a proton gradient. This Francisella tularensis subsp. holarctica (strain FTNF002-00 / FTA) protein is NADH-quinone oxidoreductase subunit N.